A 288-amino-acid chain; its full sequence is B3 domain-containing protein At2g35310 (288 aa).

DNA-binding regions (TF-B3) lie at residues 19–114 and 196–288; these read FFKV…FMQD and AEFS…VSKP.

The protein resides in the nucleus. This is B3 domain-containing protein At2g35310 from Arabidopsis thaliana (Mouse-ear cress).